The sequence spans 631 residues: Protein FRIABLE 1 (631 aa).

Low complexity predominate over residues Met-1–Ser-13. The segment at Met-1–His-36 is disordered. Residues Met-1–Arg-120 are Cytoplasmic-facing. Over residues Arg-26–His-36 the composition is skewed to basic and acidic residues. A helical; Signal-anchor for type II membrane protein membrane pass occupies residues Phe-121–Gly-141. Topologically, residues Gly-142 to Arg-631 are lumenal. 3 N-linked (GlcNAc...) asparagine glycosylation sites follow: Asn-246, Asn-329, and Asn-364. His-384–Arg-386 contributes to the substrate binding site. 2 N-linked (GlcNAc...) asparagine glycosylation sites follow: Asn-398 and Asn-425.

Belongs to the glycosyltransferase GT106 family. As to expression, ubiquitous. Strong expression in young seedlings, particularly at the junction between hypocotyl and root, in emerging cotyledons, and in parts of the roots. Also detected in the inflorescence (sepals, petals, mature pollen and siliques) and rosette leaves.

The protein resides in the golgi apparatus membrane. It functions in the pathway glycan metabolism. Functionally, glycosyltransferase required for normal cell adhesion and cell wall integrity. The sequence is that of Protein FRIABLE 1 from Arabidopsis thaliana (Mouse-ear cress).